We begin with the raw amino-acid sequence, 107 residues long: Nucleoid-associated protein BT_0257 (107 aa).

This sequence belongs to the YbaB/EbfC family. In terms of assembly, homodimer.

The protein localises to the cytoplasm. It is found in the nucleoid. Its function is as follows. Binds to DNA and alters its conformation. May be involved in regulation of gene expression, nucleoid organization and DNA protection. This Bartonella tribocorum (strain CIP 105476 / IBS 506) protein is Nucleoid-associated protein BT_0257.